The primary structure comprises 167 residues: Large ribosomal subunit protein bL9 (167 aa).

It belongs to the bacterial ribosomal protein bL9 family.

Its function is as follows. Binds to the 23S rRNA. The sequence is that of Large ribosomal subunit protein bL9 from Nitratidesulfovibrio vulgaris (strain DSM 19637 / Miyazaki F) (Desulfovibrio vulgaris).